The primary structure comprises 87 residues: Putative membrane protein insertion efficiency factor (87 aa).

This sequence belongs to the UPF0161 family.

The protein resides in the cell membrane. Functionally, could be involved in insertion of integral membrane proteins into the membrane. In Streptococcus pyogenes serotype M12 (strain MGAS2096), this protein is Putative membrane protein insertion efficiency factor.